The chain runs to 348 residues: D-alanine--D-alanine ligase (348 aa).

The region spanning 132-334 (KRILEVAGVP…YSDLIKELVV (203 aa)) is the ATP-grasp domain. ATP is bound at residue 162–217 (LEKLTFPVFVKPANMGSSVGISKAENESELRSAIDLALKYDSRILIEQGVVAREIE). Mg(2+) is bound by residues D288, E301, and N303.

Belongs to the D-alanine--D-alanine ligase family. The cofactor is Mg(2+). Mn(2+) serves as cofactor.

The protein resides in the cytoplasm. It catalyses the reaction 2 D-alanine + ATP = D-alanyl-D-alanine + ADP + phosphate + H(+). Its pathway is cell wall biogenesis; peptidoglycan biosynthesis. Functionally, cell wall formation. The chain is D-alanine--D-alanine ligase from Streptococcus thermophilus (strain ATCC BAA-491 / LMD-9).